The chain runs to 153 residues: 6,7-dimethyl-8-ribityllumazine synthase (153 aa).

5-amino-6-(D-ribitylamino)uracil contacts are provided by residues Phe-22, 56–58 (AFE), and 80–82 (TVI). Position 85-86 (85-86 (AT)) interacts with (2S)-2-hydroxy-3-oxobutyl phosphate. His-88 functions as the Proton donor in the catalytic mechanism. Phe-113 lines the 5-amino-6-(D-ribitylamino)uracil pocket. A (2S)-2-hydroxy-3-oxobutyl phosphate-binding site is contributed by Arg-127.

This sequence belongs to the DMRL synthase family.

It catalyses the reaction (2S)-2-hydroxy-3-oxobutyl phosphate + 5-amino-6-(D-ribitylamino)uracil = 6,7-dimethyl-8-(1-D-ribityl)lumazine + phosphate + 2 H2O + H(+). It participates in cofactor biosynthesis; riboflavin biosynthesis; riboflavin from 2-hydroxy-3-oxobutyl phosphate and 5-amino-6-(D-ribitylamino)uracil: step 1/2. Functionally, catalyzes the formation of 6,7-dimethyl-8-ribityllumazine by condensation of 5-amino-6-(D-ribitylamino)uracil with 3,4-dihydroxy-2-butanone 4-phosphate. This is the penultimate step in the biosynthesis of riboflavin. In Clostridium perfringens (strain ATCC 13124 / DSM 756 / JCM 1290 / NCIMB 6125 / NCTC 8237 / Type A), this protein is 6,7-dimethyl-8-ribityllumazine synthase.